The primary structure comprises 268 residues: Shikimate dehydrogenase (NADP(+)) (268 aa).

Residues 13 to 15 and threonine 60 each bind shikimate; that span reads SLS. Lysine 64 functions as the Proton acceptor in the catalytic mechanism. Glutamate 76 serves as a coordination point for NADP(+). Asparagine 85 and aspartate 100 together coordinate shikimate. Residues 124-128, 148-153, and isoleucine 209 contribute to the NADP(+) site; these read GAGGA and NRTMAR. Tyrosine 211 is a binding site for shikimate. Position 232 (glycine 232) interacts with NADP(+).

This sequence belongs to the shikimate dehydrogenase family. As to quaternary structure, homodimer.

The catalysed reaction is shikimate + NADP(+) = 3-dehydroshikimate + NADPH + H(+). It participates in metabolic intermediate biosynthesis; chorismate biosynthesis; chorismate from D-erythrose 4-phosphate and phosphoenolpyruvate: step 4/7. Its function is as follows. Involved in the biosynthesis of the chorismate, which leads to the biosynthesis of aromatic amino acids. Catalyzes the reversible NADPH linked reduction of 3-dehydroshikimate (DHSA) to yield shikimate (SA). This is Shikimate dehydrogenase (NADP(+)) from Staphylococcus aureus (strain MSSA476).